The primary structure comprises 60 residues: Large ribosomal subunit protein uL30 (60 aa).

This sequence belongs to the universal ribosomal protein uL30 family. Part of the 50S ribosomal subunit.

The polypeptide is Large ribosomal subunit protein uL30 (Acidothermus cellulolyticus (strain ATCC 43068 / DSM 8971 / 11B)).